A 744-amino-acid polypeptide reads, in one-letter code: Tripartite motif-containing protein 2 (744 aa).

A Phosphoserine modification is found at Ser10. The segment at 23 to 64 adopts an RING-type zinc-finger fold; it reads CSICLERYKNPKVLPCLHTFCERCLQNYIPAHSLTLSCPVCR. The segment at 113–154 adopts a B box-type zinc-finger fold; it reads GKPLSCPNHDGNVMEFYCQSCETAMCRECTEGEHAEHPTVPL. Zn(2+)-binding residues include Cys118, His121, Cys141, and His146. The Filamin repeat unit spans residues 320–421; sequence TTNAVASETV…IRGSPFKLKV (102 aa). Position 371 is a phosphothreonine (Thr371). 3 positions are modified to phosphoserine: Ser375, Ser424, and Ser428. The tract at residues 432–462 is disordered; sequence EGVKRRVKSPGSGHVKQKAVKRPASMYSTGK. NHL repeat units lie at residues 473–516, 520–563, 564–605, 609–652, 656–699, and 700–743; these read IFRV…FSND, KSRF…FSSD, GKFK…FQPN, VTRF…FNQE, MLKF…FDGS, and GSFL…YRYL.

The protein belongs to the TRIM/RBCC family. In terms of assembly, forms homooligomers. Interacts with TRIM3; this interaction reduces TRIM2 activity. Interacts with myosin V; myosin V may not be a substrate for ubiquitination. Interacts with NEFL. Interacts with phosphorylated BCL2L11. Interacts with SIRPA. In terms of processing, RING-type zinc finger-dependent and UBE2D1-dependent autoubiquitination.

It is found in the cytoplasm. It carries out the reaction S-ubiquitinyl-[E2 ubiquitin-conjugating enzyme]-L-cysteine + [acceptor protein]-L-lysine = [E2 ubiquitin-conjugating enzyme]-L-cysteine + N(6)-ubiquitinyl-[acceptor protein]-L-lysine.. The protein operates within protein modification; protein ubiquitination. UBE2D1-dependent E3 ubiquitin-protein ligase that mediates the ubiquitination of NEFL and of phosphorylated BCL2L11. Plays a neuroprotective function. May play a role in neuronal rapid ischemic tolerance. Plays a role in antiviral immunity and limits New World arenavirus infection independently of its ubiquitin ligase activity. In Homo sapiens (Human), this protein is Tripartite motif-containing protein 2 (TRIM2).